The chain runs to 338 residues: Lipoate-protein ligase A (338 aa).

The BPL/LPL catalytic domain occupies 29–216; it reads PATQRVLFLW…AFFAHYGERV (188 aa). Residues R71, 76–79, and K134 contribute to the ATP site; that span reads GAVF. K134 contacts (R)-lipoate.

The protein belongs to the LplA family. In terms of assembly, monomer.

It localises to the cytoplasm. The enzyme catalyses L-lysyl-[lipoyl-carrier protein] + (R)-lipoate + ATP = N(6)-[(R)-lipoyl]-L-lysyl-[lipoyl-carrier protein] + AMP + diphosphate + H(+). Its pathway is protein modification; protein lipoylation via exogenous pathway; protein N(6)-(lipoyl)lysine from lipoate: step 1/2. It functions in the pathway protein modification; protein lipoylation via exogenous pathway; protein N(6)-(lipoyl)lysine from lipoate: step 2/2. Its function is as follows. Catalyzes both the ATP-dependent activation of exogenously supplied lipoate to lipoyl-AMP and the transfer of the activated lipoyl onto the lipoyl domains of lipoate-dependent enzymes. The protein is Lipoate-protein ligase A of Escherichia coli O6:H1 (strain CFT073 / ATCC 700928 / UPEC).